A 219-amino-acid polypeptide reads, in one-letter code: Ras-related protein Rab-3B (219 aa).

At A2 the chain carries N-acetylalanine. GTP is bound by residues S31, S32, V33, G34, K35, T36, S37, P49, and S53. T36 is a binding site for Mg(2+). The Switch 1 motif lies at 45–58 (DTFTPAFVSTVGID). Mg(2+) contacts are provided by T54 and D77. The Switch 2 signature appears at 78 to 96 (TAGQERYRTITTAYYRGAM). G80 serves as a coordination point for GTP. Position 86 is a phosphothreonine (T86). The GTP site is built by N135, K136, D138, A166, and K167. Phosphoserine is present on residues S188 and S190. 2 S-geranylgeranyl cysteine lipidation sites follow: C217 and C219. Cysteine methyl ester is present on C219.

Belongs to the small GTPase superfamily. Rab family. Interacts with RPH3A and RPH3AL. Interacts with RIMS1. Interacts with RIMS2. The GTP-bound form interacts with GAS8/DRC4 (via coiled-coil domains). Interacts with GDI2, and CHM; phosphorylation at Thr-86 disrupts these interactions. Interacts with MADD (via uDENN domain); the GTP-bound form is preferred for interaction. Mg(2+) serves as cofactor. In terms of processing, phosphorylation of Thr-86 in the switch II region by LRRK2 prevents the association of RAB regulatory proteins, including CHM and RAB GDP dissociation inhibitor GDI2.

The protein resides in the cell membrane. It localises to the golgi apparatus. It carries out the reaction GTP + H2O = GDP + phosphate + H(+). Its activity is regulated as follows. Regulated by guanine nucleotide exchange factors (GEFs) which promote the exchange of bound GDP for free GTP. Regulated by GTPase activating proteins (GAPs) which increase the GTP hydrolysis activity. Inhibited by GDP dissociation inhibitors (GDIs) which prevent Rab-GDP dissociation. Functionally, the small GTPases Rab are key regulators of intracellular membrane trafficking, from the formation of transport vesicles to their fusion with membranes. Rabs cycle between an inactive GDP-bound form and an active GTP-bound form that is able to recruit to membranes different sets of downstream effectors directly responsible for vesicle formation, movement, tethering and fusion. This is Ras-related protein Rab-3B from Rattus norvegicus (Rat).